The primary structure comprises 488 residues: Beta-1,3-glucan-binding protein (488 aa).

Residues 1–17 form the signal peptide; sequence MFVTFICFLACLTCSYG. The segment at 18 to 135 is binds to curdlan, laminarihexaose and laminarin. The complex formation with laminarin induces self-association of the complexes into a macro structure, likely containing six protein and three laminarin molecules. The macro structures may form a platform on a microbial surface for recruitment of downstream proteases, as a means of amplification of the initial signal of pathogen recognition for the activation of the phenoloxidase cascade; it reads QPRAQQYVVP…GTPADTSLEP (118 aa). The interval 18 to 198 is binds to curdlan, lipopolysaccharide and lipoteichoic acid, activates the phenoloxidase cascade and is resistant to proteolytic degradation by trypsin or chymotrypsin, but is not as effective as the full-length protein in aggregation of microorganisms; it reads QPRAQQYVVP…LKDLANWEAE (181 aa). Positions 24-123 constitute a CBM39 domain; that stretch reads YVVPSAKLEA…GEWTVTEFVN (100 aa). Residues 24 to 127 form a binds to laminarihexaose and laminarin region; it reads YVVPSAKLEA…VTEFVNEDGT (104 aa). Residues aspartate 72, 99–101, and arginine 110 each bind substrate; that span reads WTY. Positions 125-158 are disordered; the sequence is DGTPADTSLEPTTAPTPVRPDQPNQPIPTHRPDP. Residues 129-139 are compositionally biased toward polar residues; the sequence is ADTSLEPTTAP. Residues 141-150 show a composition bias toward pro residues; that stretch reads PVRPDQPNQP. The region spanning 144-488 is the GH16 domain; the sequence is PDQPNQPIPT…KVDYVRVYAL (345 aa). The tract at residues 199–488 is binds to laminarin, but not to curdlan, does not activate the phenoloxidase cascade, is susceptible to proteinase digestion by trypsin or chymotrypsin and does not cause aggregation of microorganisms; the sequence is VKFPEEPDYP…KVDYVRVYAL (290 aa). Asparagine 373 and asparagine 453 each carry an N-linked (GlcNAc...) asparagine glycan.

This sequence belongs to the insect beta-1,3-glucan binding protein family. As to quaternary structure, monomer. In terms of processing, the N-terminus is blocked. Fat body and hemolymph.

The protein resides in the secreted. Involved in the recognition of invading microorganisms causing their aggregation. Activates the phenoloxidase cascade. Binds specifically to beta-1,3-glucan. Binds to curdlan, a linear water-insoluble beta-1,3-glucan polysaccharide, and to laminarin, a water-soluble beta-1,3-glucan polysaccharide containing beta-1,6 branches. Also binds to lipopolysaccharide and lipoteichoic acid. The protein is Beta-1,3-glucan-binding protein of Plodia interpunctella (Indianmeal moth).